A 225-amino-acid chain; its full sequence is Receptor-transporting protein 2 (225 aa).

Residues 1 to 196 (MCTSLTTCEW…RAQAGSGYNF (196 aa)) are Cytoplasmic-facing. A 3CxxC-type zinc finger spans residues 52 to 161 (ASGRFHCSWC…AEFCEACQEG (110 aa)). The helical transmembrane segment at 197-219 (LSLRWCLFWASLCLLVVYLQFSF) threads the bilayer. Residues 220 to 225 (LSPAFF) lie on the Extracellular side of the membrane.

The protein belongs to the TMEM7 family. As to quaternary structure, interacts with olfactory receptors. Expressed in circumvallate papillae and testis.

The protein localises to the cell membrane. Specifically promotes functional cell surface expression of olfactory receptors, but not of other GPCRs. The polypeptide is Receptor-transporting protein 2 (RTP2) (Homo sapiens (Human)).